A 550-amino-acid polypeptide reads, in one-letter code: MFKKNQKLSKDKGLEVNSVQAGAPEESDVKLNNGGKANERGSNEFLDTAQSKEKVIASVVGNMLHMSTEESEPPQQVSSTSMFSENTIYPKHEGSPKSSTKNTQLKQEDISKTSSYSKQTNSSNIPKSLAITTYPKQGSTLKPAANGTHDREAEKPKSSEDLIQSKKGDIFKPSEDSIQSKKGDMPKSSEDPIQSKKDDTAKSLEDTIQSKNGDMPKSSEDPIQSKKDDTARSLEDSIQSKKGDMPKSSDTIQSKESETPKFLQDTIQSKGGKINKQVKDSMKSKESKIRKPLKDSIQSKENKIPKSSQDSAQPKEGKIHKPLKDSLPSKEGDISKPSEDTIQAKEEITVSPEDTIQAKEEITMSPEDTIQAKEEITVSPEDTIQAKEEITVSPEDTMQSKEEITVSPEDTVQSQEGDIKSSEDVQPSENEIFPFEAEIETLEEGMVRVIKDKEEFEEVLKDAGEKLVAVDFSAPWCGPCRKMRPHFHSLSLKHEDVIFLEVDTEDCEQLVQDCEVFHLPTFQFYKNEEKVGEFSGALVEKLEKSIAELK.

A disordered region spans residues 1–50 (MFKKNQKLSKDKGLEVNSVQAGAPEESDVKLNNGGKANERGSNEFLDTAQ). Residues Ser42 and Ser51 each carry the phosphoserine modification. The disordered stretch occupies residues 63–428 (MLHMSTEESE…IKSSEDVQPS (366 aa)). Polar residues-rich tracts occupy residues 73–87 (PPQQ…SENT), 96–105 (PKSSTKNTQL), and 112–140 (KTSS…QGST). 22 tandem repeats follow at residues 104–118 (QLKQ…SYSK), 119–133 (QTNS…AITT), 134–148 (YPKQ…ANGT), 149–163 (HDRE…EDLI), 164–178 (QSKK…EDSI), 179–193 (QSKK…EDPI), 194–208 (QSKK…EDTI), 209–223 (QSKN…EDPI), 224–238 (QSKK…EDSI), 239–252 (QSKK…SDTI), 253–267 (QSKE…QDTI), 268–282 (QSKG…KDSM), 283–297 (KSKE…KDSI), 298–312 (QSKE…QDSA), 313–327 (QPKE…KDSL), 328–342 (PSKE…EDTI), 343–357 (QAKE…DTIQ), 358–384 (AKEE…EDTI), 385–399 (QAKE…DTMQ), 400–412 (SKEE…EDTV), 413–425 (QSQE…SEDV), and 426–440 (QPSE…AEIE). Residues 104 to 440 (QLKQEDISKT…EIFPFEAEIE (337 aa)) are 22 X 15 AA approximate tandem repeat of Q-P-K-X-G-D-I-P-K-S-[PS]-E-[KE]-X-I. Composition is skewed to basic and acidic residues over residues 148-205 (THDR…KSLE), 217-259 (KSSE…ESET), 277-304 (QVKD…ENKI), and 313-348 (QPKE…KEEI). A Phosphoserine modification is found at Ser158. Residues Ser351 and Ser379 each carry the phosphoserine modification. Residues 401 to 550 (KEEITVSPED…KLEKSIAELK (150 aa)) enclose the Thioredoxin domain. The residue at position 407 (Ser407) is a Phosphoserine. A disulfide bond links Cys477 and Cys480.

In terms of tissue distribution, testis-specific. Strongly expressed in the testicular seminiferous tubules, mostly in the round spermatids.

The protein localises to the cytoplasm. In terms of biological role, probably plays a regulatory role in sperm development. May participate in regulation of fibrous sheath (FS) assembly by supporting the formation of disulfide bonds during sperm tail morphogenesis. May also be required to rectify incorrect disulfide pairing and generate suitable pairs between the FS constituents. Can reduce disulfide bonds in vitro in the presence of NADP and thioredoxin reductase. This Rattus norvegicus (Rat) protein is Thioredoxin domain-containing protein 2 (Txndc2).